Here is a 112-residue protein sequence, read N- to C-terminus: Putative inner membrane protein YafU (112 aa).

Residues 1–21 lie on the Cytoplasmic side of the membrane; it reads MSSERDLVNFLGDFSMDVAKA. The chain crosses the membrane as a helical span at residues 22–42; that stretch reads VIAGGVATAIGSLASFACVSF. Gly43 is a topological domain (periplasmic). Residues 44–64 form a helical membrane-spanning segment; sequence FPVILVGGAILLTGIVCTVVL. Residues 65 to 112 are Cytoplasmic-facing; it reads NEIDAQCHLSEKLKYAIRDGLKRQQELDKWKRENMTPFMYVLNTPPVI.

Its subcellular location is the cell inner membrane. In Escherichia coli (strain K12), this protein is Putative inner membrane protein YafU (yafU).